The chain runs to 352 residues: Thiosulfate transporter TsuA (352 aa).

Residues 1–21 (MFSMILSGLICGALLGFVMQR) form a helical membrane-spanning segment. Over 22–44 (GRFCLTGGFRDMYIVKNNRMFYA) the chain is Cytoplasmic. Residues 45-65 (LLIAISVQSVGVFALIQAGLL) traverse the membrane as a helical segment. At 66–70 (TYEAG) the chain is on the periplasmic side. A helical transmembrane segment spans residues 71–91 (AFPWLGTVIGGYIFGLGIVLA). Topologically, residues 92-102 (GGCATGTWYRA) are cytoplasmic. A helical membrane pass occupies residues 103-123 (GEGLIGSWIALFTYMVMSAVM). Topologically, residues 124–148 (RSPHASGLNQTLQHYSTEHNSIAET) are periplasmic. The chain crosses the membrane as a helical span at residues 149–169 (FNLSVWPLVAVLLVITLWVVM). Residues 170–197 (KELKKPKLKVATLPPRRTGIAHILFEKR) lie on the Cytoplasmic side of the membrane. Residues 198–218 (WHPFVTAVLIGLIALLAWPLS) form a helical membrane-spanning segment. Over 219 to 247 (EATGRMFGLGITSPTANILQFLVAGDMKY) the chain is Periplasmic. A helical membrane pass occupies residues 248 to 268 (INWGVFLVLGIFVGSFIAAKA). Topologically, residues 269-289 (SREFRVRAADAQTTLRSGLGG) are cytoplasmic. A helical membrane pass occupies residues 290–310 (VLMGFGASIAGGCSIGNGLVM). Topologically, residues 311–317 (TAMMTWQ) are periplasmic. Residues 318 to 338 (GWIGLVFMILGVWTASWLVYV) form a helical membrane-spanning segment. The Cytoplasmic portion of the chain corresponds to 339-352 (RPQRKARLATAAAN).

Belongs to the TsuA/YedE (TC 9.B.102) family.

The protein localises to the cell inner membrane. It catalyses the reaction thiosulfate(in) = thiosulfate(out). Its function is as follows. Mediates thiosulfate uptake. In Escherichia coli (strain K12), this protein is Thiosulfate transporter TsuA.